The primary structure comprises 205 residues: Methylthioribulose-1-phosphate dehydratase (205 aa).

The Zn(2+) site is built by H96 and H98.

It belongs to the aldolase class II family. MtnB subfamily. It depends on Zn(2+) as a cofactor.

It catalyses the reaction 5-(methylsulfanyl)-D-ribulose 1-phosphate = 5-methylsulfanyl-2,3-dioxopentyl phosphate + H2O. It participates in amino-acid biosynthesis; L-methionine biosynthesis via salvage pathway; L-methionine from S-methyl-5-thio-alpha-D-ribose 1-phosphate: step 2/6. Functionally, catalyzes the dehydration of methylthioribulose-1-phosphate (MTRu-1-P) into 2,3-diketo-5-methylthiopentyl-1-phosphate (DK-MTP-1-P). The protein is Methylthioribulose-1-phosphate dehydratase of Pseudomonas paraeruginosa (strain DSM 24068 / PA7) (Pseudomonas aeruginosa (strain PA7)).